The primary structure comprises 217 residues: Probable transaldolase (217 aa).

The active-site Schiff-base intermediate with substrate is Lys-84.

It belongs to the transaldolase family. Type 3B subfamily.

It is found in the cytoplasm. It carries out the reaction D-sedoheptulose 7-phosphate + D-glyceraldehyde 3-phosphate = D-erythrose 4-phosphate + beta-D-fructose 6-phosphate. It participates in carbohydrate degradation; pentose phosphate pathway; D-glyceraldehyde 3-phosphate and beta-D-fructose 6-phosphate from D-ribose 5-phosphate and D-xylulose 5-phosphate (non-oxidative stage): step 2/3. Functionally, transaldolase is important for the balance of metabolites in the pentose-phosphate pathway. This is Probable transaldolase from Roseiflexus castenholzii (strain DSM 13941 / HLO8).